The chain runs to 2263 residues: Collagen alpha-6(VI) chain (2263 aa).

Residues 1 to 19 (MMLLILFLVIICSHISVNQ) form the signal peptide. The segment at 20 to 1391 (DSGPEYADVV…TCCCLFCKCI (1372 aa)) is nonhelical region. 5 consecutive VWFA domains span residues 27 to 206 (DVVF…IKDV), 229 to 411 (DVVF…RNQI), 436 to 606 (DIYL…RNQV), 622 to 791 (DIMF…EDDL), and 809 to 982 (DVVF…FSDV). N-linked (GlcNAc...) asparagine glycosylation is found at asparagine 198, asparagine 275, asparagine 288, asparagine 347, and asparagine 520. N-linked (GlcNAc...) asparagine glycosylation is found at asparagine 930 and asparagine 988. 2 VWFA domains span residues 1000-1171 (DLVF…NKRI) and 1187-1371 (DVVV…GSRL). An N-linked (GlcNAc...) asparagine glycan is attached at asparagine 1290. Positions 1392–1725 (GGDGTMGDPG…GRKGVKGAKG (334 aa)) are triple-helical region. The segment at 1397–1723 (MGDPGPPGKR…PPGRKGVKGA (327 aa)) is disordered. Residues 1498–1508 (TPGDRGAKGLR) show a composition bias toward basic and acidic residues. Residues 1508 to 1510 (RGD) carry the Cell attachment site motif. Residues 1547–1559 (SRRKTAAHGRRGH) are compositionally biased toward basic residues. Gly residues predominate over residues 1680 to 1689 (GDPGGPGETG). A nonhelical region region spans residues 1726 to 2263 (LASFSTCELI…MIESAPKQHD (538 aa)). 2 consecutive VWFA domains span residues 1757 to 1937 (ELVF…ERLQ) and 1965 to 2166 (DAAF…INSI).

Belongs to the type VI collagen family. Trimers composed of three different chains: alpha-1(VI), alpha-2(VI), and alpha-3(VI) or alpha-5(VI) or alpha-6(VI). In terms of processing, prolines at the third position of the tripeptide repeating unit (G-X-Y) are hydroxylated in some or all of the chains.

The protein localises to the secreted. It localises to the extracellular space. The protein resides in the extracellular matrix. Its function is as follows. Collagen VI acts as a cell-binding protein. This Homo sapiens (Human) protein is Collagen alpha-6(VI) chain (COL6A6).